We begin with the raw amino-acid sequence, 482 residues long: tRNA sulfurtransferase (482 aa).

A THUMP domain is found at 61-165 (LAIRDALTRI…DDRLLLIKGR (105 aa)). ATP is bound by residues 183–184 (LI), K265, G287, and Q296. An intrachain disulfide couples C344 to C456. Positions 404–482 (FGPNDVILDI…GFNNVKVYRP (79 aa)) constitute a Rhodanese domain. The active-site Cysteine persulfide intermediate is C456.

It belongs to the ThiI family.

The protein localises to the cytoplasm. It carries out the reaction [ThiI sulfur-carrier protein]-S-sulfanyl-L-cysteine + a uridine in tRNA + 2 reduced [2Fe-2S]-[ferredoxin] + ATP + H(+) = [ThiI sulfur-carrier protein]-L-cysteine + a 4-thiouridine in tRNA + 2 oxidized [2Fe-2S]-[ferredoxin] + AMP + diphosphate. The catalysed reaction is [ThiS sulfur-carrier protein]-C-terminal Gly-Gly-AMP + S-sulfanyl-L-cysteinyl-[cysteine desulfurase] + AH2 = [ThiS sulfur-carrier protein]-C-terminal-Gly-aminoethanethioate + L-cysteinyl-[cysteine desulfurase] + A + AMP + 2 H(+). It functions in the pathway cofactor biosynthesis; thiamine diphosphate biosynthesis. Its function is as follows. Catalyzes the ATP-dependent transfer of a sulfur to tRNA to produce 4-thiouridine in position 8 of tRNAs, which functions as a near-UV photosensor. Also catalyzes the transfer of sulfur to the sulfur carrier protein ThiS, forming ThiS-thiocarboxylate. This is a step in the synthesis of thiazole, in the thiamine biosynthesis pathway. The sulfur is donated as persulfide by IscS. In Escherichia coli O127:H6 (strain E2348/69 / EPEC), this protein is tRNA sulfurtransferase.